The following is a 207-amino-acid chain: Outer-membrane lipoprotein LolB (207 aa).

The signal sequence occupies residues Met-1–Gly-23. Cys-24 is lipidated: N-palmitoyl cysteine. Cys-24 carries S-diacylglycerol cysteine lipidation.

The protein belongs to the LolB family. In terms of assembly, monomer.

The protein resides in the cell outer membrane. Plays a critical role in the incorporation of lipoproteins in the outer membrane after they are released by the LolA protein. The polypeptide is Outer-membrane lipoprotein LolB (Shewanella amazonensis (strain ATCC BAA-1098 / SB2B)).